A 504-amino-acid chain; its full sequence is Maturase K (504 aa).

Belongs to the intron maturase 2 family. MatK subfamily.

Its subcellular location is the plastid. It is found in the chloroplast. Usually encoded in the trnK tRNA gene intron. Probably assists in splicing its own and other chloroplast group II introns. This Actinidia deliciosa (Kiwi) protein is Maturase K.